We begin with the raw amino-acid sequence, 511 residues long: Alpha-amylase 1 (511 aa).

Positions 1 to 15 (MKFFLLLSLIGFCWA) are cleaved as a signal peptide. Gln-16 is subject to Pyrrolidone carboxylic acid. Cystine bridges form between Cys-43/Cys-101, Cys-85/Cys-130, and Cys-156/Cys-175. Ca(2+) contacts are provided by Asn-115, Arg-173, and Asp-182. Arg-210 is a binding site for chloride. Asp-212 acts as the Nucleophile in catalysis. His-216 contributes to the Ca(2+) binding site. Glu-248 functions as the Proton donor in the catalytic mechanism. Residues Asn-313 and Arg-352 each contribute to the chloride site. 2 cysteine pairs are disulfide-bonded: Cys-393/Cys-399 and Cys-465/Cys-477.

It belongs to the glycosyl hydrolase 13 family. Monomer. Ca(2+) is required as a cofactor. It depends on chloride as a cofactor. As to expression, expressed in liver and saliva.

It localises to the secreted. It catalyses the reaction Endohydrolysis of (1-&gt;4)-alpha-D-glucosidic linkages in polysaccharides containing three or more (1-&gt;4)-alpha-linked D-glucose units.. This Mus musculus (Mouse) protein is Alpha-amylase 1 (Amy1).